The sequence spans 134 residues: Protein PsiE homolog (134 aa).

A run of 4 helical transmembrane segments spans residues 14–34 (LQWILNIALIILSIVLSIFLI), 56–76 (VESIIVYFLYFEFIALIIKYF), 82–102 (FPLRYFIYIGITALIRLIIVS), and 106–126 (PMETLLYAGAILVLVIALYIS).

This sequence belongs to the PsiE family.

It is found in the cell membrane. The sequence is that of Protein PsiE homolog from Bacillus anthracis.